The primary structure comprises 745 residues: Isocitrate dehydrogenase [NADP] 2 (745 aa).

Residues Asn-87 and Ser-89 each contribute to the NADP(+) site. Residues Ser-134, Asn-137, Arg-141, Arg-147, and Lys-257 each contribute to the D-threo-isocitrate site. Asp-352 is a binding site for Mg(2+). Tyr-422 and Arg-550 together coordinate D-threo-isocitrate. Residues Asp-551 and Asp-555 each coordinate Mg(2+). Residues Gly-587, Ser-588, Ala-589, His-592, Arg-603, Asp-605, and Arg-652 each contribute to the NADP(+) site.

The protein belongs to the monomeric-type IDH family. May form homotrimers. Also forms homotetramers at low salt concentration, which are dissociated into homodimers, but not into monomers, at high salt concentration (1 M). Requires Mg(2+) as cofactor.

The enzyme catalyses D-threo-isocitrate + NADP(+) = 2-oxoglutarate + CO2 + NADPH. Functionally, catalyzes the oxidative decarboxylation of isocitrate to 2-oxoglutarate and carbon dioxide with the concomitant reduction of NADP(+). Cannot use NAD(+). The sequence is that of Isocitrate dehydrogenase [NADP] 2 from Mycobacterium tuberculosis (strain ATCC 25618 / H37Rv).